Reading from the N-terminus, the 278-residue chain is Soluble NSF attachment protein homolog FPV011 (278 aa).

This sequence belongs to the SNAP family.

This is Soluble NSF attachment protein homolog FPV011 from Fowlpox virus (strain NVSL) (FPV).